The chain runs to 218 residues: Ribulose-phosphate 3-epimerase (218 aa).

Residue Ser10 participates in substrate binding. A divalent metal cation-binding residues include His35, Asp37, and His68. Asp37 serves as the catalytic Proton acceptor. Substrate-binding positions include His68, 144–147 (GFSG), 177–179 (DGG), and 199–200 (GS). Asp177 provides a ligand contact to a divalent metal cation. The active-site Proton donor is the Asp177.

The protein belongs to the ribulose-phosphate 3-epimerase family. It depends on a divalent metal cation as a cofactor.

The catalysed reaction is D-ribulose 5-phosphate = D-xylulose 5-phosphate. Its pathway is carbohydrate degradation. In terms of biological role, catalyzes the reversible epimerization of D-ribulose 5-phosphate to D-xylulose 5-phosphate. The sequence is that of Ribulose-phosphate 3-epimerase from Treponema pallidum (strain Nichols).